Reading from the N-terminus, the 305-residue chain is Probable aspartoacylase (305 aa).

Positions 13 and 16 each coordinate Zn(2+). Residues Arg-55 and 62-63 each bind substrate; that span reads NR. Residue His-105 coordinates Zn(2+). Substrate contacts are provided by Glu-163 and Tyr-273.

This sequence belongs to the AspA/AstE family. Aspartoacylase subfamily. Requires Zn(2+) as cofactor.

It carries out the reaction an N-acyl-L-aspartate + H2O = a carboxylate + L-aspartate. This chain is Probable aspartoacylase, found in Prochlorococcus marinus (strain NATL1A).